The primary structure comprises 198 residues: Glycerol-3-phosphate acyltransferase 1 (198 aa).

5 consecutive transmembrane segments (helical) span residues 5–25 (ALLA…AWLA), 52–72 (GPAL…VLLA), 81–101 (WAAL…FLAF), 111–131 (FGVI…LAIA), and 138–158 (FVSA…LVLP).

It belongs to the PlsY family. As to quaternary structure, probably interacts with PlsX.

The protein localises to the cell membrane. The catalysed reaction is an acyl phosphate + sn-glycerol 3-phosphate = a 1-acyl-sn-glycero-3-phosphate + phosphate. It participates in lipid metabolism; phospholipid metabolism. Functionally, catalyzes the transfer of an acyl group from acyl-phosphate (acyl-PO(4)) to glycerol-3-phosphate (G3P) to form lysophosphatidic acid (LPA). This enzyme utilizes acyl-phosphate as fatty acyl donor, but not acyl-CoA or acyl-ACP. The polypeptide is Glycerol-3-phosphate acyltransferase 1 (Deinococcus radiodurans (strain ATCC 13939 / DSM 20539 / JCM 16871 / CCUG 27074 / LMG 4051 / NBRC 15346 / NCIMB 9279 / VKM B-1422 / R1)).